The following is an 886-amino-acid chain: Coatomer subunit gamma (886 aa).

HEAT repeat units follow at residues 66–103, 288–325, 327–359, 360–397, and 472–509; these read VEAT…SSDE, RELT…THPM, VTNC…TGNE, SSVE…KFPL, and SDPS…MVES. The disordered stretch occupies residues 592–613; the sequence is SQPLAEKKAQGKKPTGLGAPPA.

This sequence belongs to the COPG family. As to quaternary structure, oligomeric complex that consists of at least the alpha, beta, beta', gamma, delta, epsilon and zeta subunits.

It localises to the cytoplasm. The protein localises to the golgi apparatus membrane. It is found in the cytoplasmic vesicle. Its subcellular location is the COPI-coated vesicle membrane. In terms of biological role, the coatomer is a cytosolic protein complex that binds to dilysine motifs and reversibly associates with Golgi non-clathrin-coated vesicles, which further mediate biosynthetic protein transport from the ER, via the Golgi up to the trans Golgi network. Coatomer complex is required for budding from Golgi membranes, and is essential for the retrograde Golgi-to-ER transport of dilysine-tagged proteins. The polypeptide is Coatomer subunit gamma (Arabidopsis thaliana (Mouse-ear cress)).